The chain runs to 343 residues: Isopentenyl-diphosphate delta-isomerase (343 aa).

Substrate is bound at residue R6–K7. Residues S63, S64–T66, S94, and N122 contribute to the FMN site. Residue S94–R96 coordinates substrate. Residue Q157 participates in substrate binding. E158 is a Mg(2+) binding site. FMN contacts are provided by residues K189, T219, G269–K271, and A290–G291.

This sequence belongs to the IPP isomerase type 2 family. In terms of assembly, homooctamer. Dimer of tetramers. FMN serves as cofactor. It depends on NADPH as a cofactor. Requires Mg(2+) as cofactor.

The protein resides in the cytoplasm. It catalyses the reaction isopentenyl diphosphate = dimethylallyl diphosphate. Functionally, involved in the biosynthesis of isoprenoids. Catalyzes the 1,3-allylic rearrangement of the homoallylic substrate isopentenyl (IPP) to its allylic isomer, dimethylallyl diphosphate (DMAPP). The sequence is that of Isopentenyl-diphosphate delta-isomerase from Rickettsia bellii (strain OSU 85-389).